The chain runs to 195 residues: Ribosomal RNA small subunit methyltransferase G (195 aa).

S-adenosyl-L-methionine is bound by residues Gly-60, Leu-65, 114–115, and Arg-128; that span reads IE.

The protein belongs to the methyltransferase superfamily. RNA methyltransferase RsmG family.

It localises to the cytoplasm. It carries out the reaction guanosine(527) in 16S rRNA + S-adenosyl-L-methionine = N(7)-methylguanosine(527) in 16S rRNA + S-adenosyl-L-homocysteine. Functionally, specifically methylates the N7 position of guanine in position 527 of 16S rRNA. This chain is Ribosomal RNA small subunit methyltransferase G, found in Dinoroseobacter shibae (strain DSM 16493 / NCIMB 14021 / DFL 12).